The chain runs to 539 residues: Chaperonin GroEL (539 aa).

Residues T29–P32, D86–T90, G413, D479–L481, and D495 contribute to the ATP site.

It belongs to the chaperonin (HSP60) family. Forms a cylinder of 14 subunits composed of two heptameric rings stacked back-to-back. Interacts with the co-chaperonin GroES.

The protein localises to the cytoplasm. The catalysed reaction is ATP + H2O + a folded polypeptide = ADP + phosphate + an unfolded polypeptide.. Its function is as follows. Together with its co-chaperonin GroES, plays an essential role in assisting protein folding. The GroEL-GroES system forms a nano-cage that allows encapsulation of the non-native substrate proteins and provides a physical environment optimized to promote and accelerate protein folding. This is Chaperonin GroEL from Pseudothermotoga lettingae (strain ATCC BAA-301 / DSM 14385 / NBRC 107922 / TMO) (Thermotoga lettingae).